A 73-amino-acid chain; its full sequence is Metallothionein (73 aa).

Residues Cys-15, Cys-20, Cys-26, Cys-28, Cys-32, Cys-34, Cys-39, Cys-46, Cys-48, Cys-52, Cys-54, Cys-58, Cys-64, Cys-66, Cys-70, and Cys-72 each contribute to the Cd(2+) site.

The protein belongs to the metallothionein superfamily. Type 2 family.

The metallothioneins are involved in the cellular sequestration of toxic metal ions. This chain is Metallothionein, found in Dreissena polymorpha (Zebra mussel).